The sequence spans 92 residues: Acylphosphatase (92 aa).

The Acylphosphatase-like domain occupies 5-92 (RAHVFISGRV…GKEGIFTIVW (88 aa)). Residues Arg-20 and Asn-38 contribute to the active site.

The protein belongs to the acylphosphatase family.

It carries out the reaction an acyl phosphate + H2O = a carboxylate + phosphate + H(+). The chain is Acylphosphatase (acyP) from Chloroflexus aurantiacus (strain ATCC 29366 / DSM 635 / J-10-fl).